The following is a 340-amino-acid chain: Photosystem II protein D1 (340 aa).

Helical transmembrane passes span 25–42 (YIGWFGLLVFPLLSLATV), 114–129 (HFFLGVCGWMGREWEF), and 138–152 (WIFVAFSAPIAAAAA). H114 is a chlorophyll a binding site. W122 contributes to the pheophytin a binding site. [CaMn4O5] cluster is bound by residues D166 and E185. The helical transmembrane segment at 193 to 214 (FHILGVAGVFGGSLFSAMHGSL) threads the bilayer. A chlorophyll a-binding site is contributed by H194. Residues H211 and 260–261 (SF) each bind a quinone. H211 lines the Fe cation pocket. H268 is a Fe cation binding site. The helical transmembrane segment at 270-284 (FLAAWPVIGIWITSL) threads the bilayer. Positions 328, 329, 338, and 340 each coordinate [CaMn4O5] cluster.

The protein belongs to the reaction center PufL/M/PsbA/D family. PSII is composed of 1 copy each of membrane proteins PsbA, PsbB, PsbC, PsbD, PsbE, PsbF, PsbH, PsbI, PsbJ, PsbK, PsbL, PsbM, PsbT, PsbX, PsbY, PsbZ, Psb30/Ycf12, at least 3 peripheral proteins of the oxygen-evolving complex and a large number of cofactors. It forms dimeric complexes. The D1/D2 heterodimer binds P680, chlorophylls that are the primary electron donor of PSII, and subsequent electron acceptors. It shares a non-heme iron and each subunit binds pheophytin, quinone, additional chlorophylls, carotenoids and lipids. D1 provides most of the ligands for the Mn4-Ca-O5 cluster of the oxygen-evolving complex (OEC). There is also a Cl(-1) ion associated with D1 and D2, which is required for oxygen evolution. The PSII complex binds additional chlorophylls, carotenoids and specific lipids. serves as cofactor. Tyr-157 forms a radical intermediate that is referred to as redox-active TyrZ, YZ or Y-Z.

The protein localises to the plastid. Its subcellular location is the chloroplast thylakoid membrane. The enzyme catalyses 2 a plastoquinone + 4 hnu + 2 H2O = 2 a plastoquinol + O2. In terms of biological role, photosystem II (PSII) is a light-driven water:plastoquinone oxidoreductase that uses light energy to abstract electrons from H(2)O, generating O(2) and a proton gradient subsequently used for ATP formation. It consists of a core antenna complex that captures photons, and an electron transfer chain that converts photonic excitation into a charge separation. The D1/D2 (PsbA/PsbD) reaction center heterodimer binds P680, the primary electron donor of PSII as well as several subsequent electron acceptors. In Amphidinium carterae (Dinoflagellate), this protein is Photosystem II protein D1.